The sequence spans 158 residues: NADH-quinone oxidoreductase subunit B (158 aa).

[4Fe-4S] cluster is bound by residues Cys37, Cys38, Cys102, and Cys132.

This sequence belongs to the complex I 20 kDa subunit family. NDH-1 is composed of 14 different subunits. Subunits NuoB, C, D, E, F, and G constitute the peripheral sector of the complex. It depends on [4Fe-4S] cluster as a cofactor.

The protein localises to the cell inner membrane. The catalysed reaction is a quinone + NADH + 5 H(+)(in) = a quinol + NAD(+) + 4 H(+)(out). Functionally, NDH-1 shuttles electrons from NADH, via FMN and iron-sulfur (Fe-S) centers, to quinones in the respiratory chain. The immediate electron acceptor for the enzyme in this species is believed to be ubiquinone. Couples the redox reaction to proton translocation (for every two electrons transferred, four hydrogen ions are translocated across the cytoplasmic membrane), and thus conserves the redox energy in a proton gradient. This Thiobacillus denitrificans (strain ATCC 25259 / T1) protein is NADH-quinone oxidoreductase subunit B.